A 109-amino-acid chain; its full sequence is Parvalbumin beta (109 aa).

EF-hand domains follow at residues 38-73 (KSKD…FDGK) and 77-109 (LTDK…VTKG). Residues Asp-51, Asp-53, Ser-55, Tyr-57, Glu-59, Glu-62, Asp-90, Asp-92, Asp-94, Lys-96, and Glu-101 each contribute to the Ca(2+) site.

Belongs to the parvalbumin family.

Functionally, in muscle, parvalbumin is thought to be involved in relaxation after contraction. It binds two calcium ions. This chain is Parvalbumin beta, found in Boa constrictor (Boa).